The primary structure comprises 513 residues: Cytochrome P450 monooxygenase ARMGADRAFT_1018418 (513 aa).

The chain crosses the membrane as a helical span at residues 1-21; it reads MTHASSAWFLAAVVIVTFIVV. Cysteine 435 contributes to the heme binding site. Residue asparagine 442 is glycosylated (N-linked (GlcNAc...) asparagine).

This sequence belongs to the cytochrome P450 family. Heme is required as a cofactor.

It localises to the membrane. It participates in secondary metabolite biosynthesis. In terms of biological role, cytochrome P450 monooxygenase, part of the gene cluster that mediates the biosynthesis of melleolides, a range of antifungal and phytotoxic polyketide derivatives composed of an orsellinic acid (OA) moiety esterified to various sesquiterpene alcohols. The first step in melleolides biosynthesis is performed by the delta(6)-protoilludene synthase PRO1 which catalyzes the cyclization of farnesyl diphosphate to protoilludene. The orsellinic acid synthase armB produces OA by condensing acetyl-CoA with 3 malonyl-CoA units in a three-round chain elongation reaction folowed by a C2-C7 ring closure. ArmB further catalyzes the trans-esterification of OA to the various sesquiterpene alcohols resulting from the hydroxylation of protoilludene. The melleolides cluster also includes 5 cytochrome P450 monooxygenases, 4 NAD(+)-dependent oxidoreductases, one flavin-dependent oxidoreductase, and one O-methyltransferase. The cytochrome P450 monooxygenases may be involved in protoilludene hydroxylation to elaborate melleolides with multiple alcohol groups, such as melleolide D, which carries alcohol functionalities at C-4, C-5, C-10, and C-13. The role of the NAD(+)-dependent enzymes remains unknown. Numerous melleolides, including arnamial, show 5'-O-methylation of the aromatic moiety which may be catalyzed by the methyltransferase encoded in the cluster. The flavin-dependent oxidoreductase might represent the dehydrogenase yielding the aldehyde in position 1 of arnamial and other melleolides. Finally, several halogenase localized outside of the cluster, are able to catalyze the transfer of a single chlorine atom to the melleolide backbone, resulting in a 6'-chloromelleolide product. This chain is Cytochrome P450 monooxygenase ARMGADRAFT_1018418, found in Armillaria gallica (Bulbous honey fungus).